Consider the following 250-residue polypeptide: MLFLHDVWVNWFEGEENGYNVCHFHEWRKEDTVELLDQTPLLRVPSVLFHYIENDLSELPKELLDQVHQKSYVRKNHERTKLEYCFVVTDGIGIIAVDTIGYTIPVRKSRLIPRQEQLVYEMVKDVEPESFQFEPAQLESSKEYHILSLAPEHVRGLTRKERQIKQLMFMALDQLKGLKNRAEIVYWYTEWNPHMYEQIKRMSFEEIWDMLYNETIEGWSDKHLAFCENLIKGQPFFEKLWEMEQESKVN.

The protein belongs to the UPF0736 family.

This chain is UPF0736 protein RBAM_011410, found in Bacillus velezensis (strain DSM 23117 / BGSC 10A6 / LMG 26770 / FZB42) (Bacillus amyloliquefaciens subsp. plantarum).